A 352-amino-acid polypeptide reads, in one-letter code: NADP-dependent isopropanol dehydrogenase (352 aa).

The Zn(2+) site is built by Cys-37, His-59, and Asp-150. Residues 175–178, 198–200, Tyr-218, 265–267, and Lys-340 each bind NADP(+); these read IGPV, GSR, and VNY.

This sequence belongs to the zinc-containing alcohol dehydrogenase family. As to quaternary structure, homotetramer. It depends on Zn(2+) as a cofactor.

It carries out the reaction propan-2-ol + NADP(+) = acetone + NADPH + H(+). Alcohol dehydrogenase with a preference for medium chain secondary alcohols, such as 2-butanol and isopropanol. Has very low activity with primary alcohols, such as ethanol. Under physiological conditions, the enzyme reduces aldehydes and 2-ketones to produce secondary alcohols. Is also active with acetaldehyde and propionaldehyde. The polypeptide is NADP-dependent isopropanol dehydrogenase (adh) (Thermoanaerobacter brockii (Thermoanaerobium brockii)).